Consider the following 179-residue polypeptide: Crossover junction endodeoxyribonuclease RuvC (179 aa).

Residues Asp14, Glu74, and Asp147 contribute to the active site. Asp14, Glu74, and Asp147 together coordinate Mg(2+).

It belongs to the RuvC family. In terms of assembly, homodimer which binds Holliday junction (HJ) DNA. The HJ becomes 2-fold symmetrical on binding to RuvC with unstacked arms; it has a different conformation from HJ DNA in complex with RuvA. In the full resolvosome a probable DNA-RuvA(4)-RuvB(12)-RuvC(2) complex forms which resolves the HJ. Mg(2+) serves as cofactor.

The protein localises to the cytoplasm. It carries out the reaction Endonucleolytic cleavage at a junction such as a reciprocal single-stranded crossover between two homologous DNA duplexes (Holliday junction).. The RuvA-RuvB-RuvC complex processes Holliday junction (HJ) DNA during genetic recombination and DNA repair. Endonuclease that resolves HJ intermediates. Cleaves cruciform DNA by making single-stranded nicks across the HJ at symmetrical positions within the homologous arms, yielding a 5'-phosphate and a 3'-hydroxyl group; requires a central core of homology in the junction. The consensus cleavage sequence is 5'-(A/T)TT(C/G)-3'. Cleavage occurs on the 3'-side of the TT dinucleotide at the point of strand exchange. HJ branch migration catalyzed by RuvA-RuvB allows RuvC to scan DNA until it finds its consensus sequence, where it cleaves and resolves the cruciform DNA. The sequence is that of Crossover junction endodeoxyribonuclease RuvC from Rubrobacter xylanophilus (strain DSM 9941 / JCM 11954 / NBRC 16129 / PRD-1).